Reading from the N-terminus, the 218-residue chain is Ribose-5-phosphate isomerase A (218 aa).

Substrate contacts are provided by residues 28–31 (TGST), 81–84 (DGAD), and 94–97 (KGGG). E103 acts as the Proton acceptor in catalysis. Residue K121 coordinates substrate.

This sequence belongs to the ribose 5-phosphate isomerase family. In terms of assembly, homodimer.

It catalyses the reaction aldehydo-D-ribose 5-phosphate = D-ribulose 5-phosphate. Its pathway is carbohydrate degradation; pentose phosphate pathway; D-ribose 5-phosphate from D-ribulose 5-phosphate (non-oxidative stage): step 1/1. In terms of biological role, catalyzes the reversible conversion of ribose-5-phosphate to ribulose 5-phosphate. In Psychromonas ingrahamii (strain DSM 17664 / CCUG 51855 / 37), this protein is Ribose-5-phosphate isomerase A.